A 236-amino-acid polypeptide reads, in one-letter code: Small ribosomal subunit protein uS2c (236 aa).

This sequence belongs to the universal ribosomal protein uS2 family.

The protein localises to the plastid. Its subcellular location is the chloroplast. This chain is Small ribosomal subunit protein uS2c (rps2), found in Lolium perenne (Perennial ryegrass).